The primary structure comprises 230 residues: MKLTWLGHSGFRLEIEQAVILIDPWLSGNPMFPEDRRDEAIQGATHILLTHGHGDHTGDTLSIARELKIPVVGIYDLINTWQTHQGIEGLGFNKGGTVDLGGAKVTMVNASHSSSFDGNEGPVYAGHESGYMIAGEGHVIYVSGDTDIMADMQWMGEYHQPDIGILCAGGHFTMDMDRAAWAARKYFDFKTVIPCHYKTFPLLAQDAEVLKAGLPGVQVIEPEVMQPIPL.

The protein belongs to the UPF0173 family.

This chain is UPF0173 metal-dependent hydrolase Pden_0574, found in Paracoccus denitrificans (strain Pd 1222).